The primary structure comprises 143 residues: Transcriptional regulator MraZ (143 aa).

SpoVT-AbrB domains lie at 5 to 47 (TYTP…PRAE) and 76 to 119 (TDEQ…DAAA).

This sequence belongs to the MraZ family. As to quaternary structure, forms oligomers.

The protein localises to the cytoplasm. It localises to the nucleoid. In Mycobacterium sp. (strain JLS), this protein is Transcriptional regulator MraZ.